The primary structure comprises 161 residues: Type IV major fimbrial protein FimA (161 aa).

A propeptide spans 1 to 7 (MKSLQKG) (leader sequence). Residue phenylalanine 8 is modified to N-methylphenylalanine. The chain crosses the membrane as a helical span at residues 8–28 (FTLIELMIVVAIIGILAAFAI). A disulfide bond links cysteine 63 and cysteine 106.

The protein belongs to the N-Me-Phe pilin family. In terms of assembly, the pili are polar flexible filaments of about 5.4 nanometers diameter and 2.5 micrometers average length; they consist of only a single polypeptide chain arranged in a helical configuration of five subunits per turn in the assembled pilus.

The protein localises to the fimbrium. Its subcellular location is the membrane. Functionally, major component of the type IV fimbriae that plays an essential role in twitching motility, natural transformation, and protease secretion. The chain is Type IV major fimbrial protein FimA (fimA) from Dichelobacter nodosus (Bacteroides nodosus).